The primary structure comprises 1083 residues: Histone-lysine N-methyltransferase ATX2 (1083 aa).

A Nuclear localization signal motif is present at residues 77–84 (HRRPEIVH). The 65-residue stretch at 315 to 379 (PRDIIWAKLT…VKQAVSFLKG (65 aa)) folds into the PWWP domain. A disordered region spans residues 422 to 443 (TDCSERINSGEEDSSNSGDDYT). One can recognise an FYR N-terminal domain in the interval 457–516 (DCLHRIGDLQIINLGRIVTDSEFFKDSKHTWPEGYTATRKFISLKDPNASAMYKMEVLRD). The region spanning 520–604 (KTRPVFRVTT…PPSKVSQRKY (85 aa)) is the FYR C-terminal domain. A PHD-type 1 zinc finger spans residues 626 to 677 (LDKCNVCHMDEEYENNLFLQCDKCRMMVHTRCYGQLEPHNGILWLCNLCRPV). The C2HC pre-PHD-type zinc-finger motif lies at 682-715 (PPRCCLCPVVGGAMKPTTDGRWAHLACAIWIPET). Positions 682 to 807 (PPRCCLCPVV…RLLSFCKRHR (126 aa)) are extended PHD domain (ePHD). The segment at 739-807 (LLCSICGVSY…RLLSFCKRHR (69 aa)) adopts a PHD-type 2 zinc-finger fold. The SET domain maps to 919 to 1037 (KRLAFGKSGI…KWEELTYDYR (119 aa)). S-adenosyl-L-methionine is bound at residue His-929. Ser-968 carries O-linked (GlcNAc) serine glycosylation. Residues Tyr-975 and 998 to 999 (NH) each bind S-adenosyl-L-methionine. Cys-1001 contacts Zn(2+). Tyr-1036 lines the S-adenosyl-L-methionine pocket. One can recognise a Post-SET domain in the interval 1043–1059 (ERLACYCGFPRCRGVVN). Zn(2+) is bound by residues Cys-1047, Cys-1049, and Cys-1054.

Belongs to the class V-like SAM-binding methyltransferase superfamily. Histone-lysine methyltransferase family. TRX/MLL subfamily. In terms of processing, activated via O-glycosylation. Expressed in roots, leaves and flowers and, to a lower extent, in young seedlings.

It is found in the nucleus. The catalysed reaction is N(6)-methyl-L-lysyl-[histone] + S-adenosyl-L-methionine = N(6),N(6)-dimethyl-L-lysyl-[histone] + S-adenosyl-L-homocysteine + H(+). Its function is as follows. Histone methyltransferase. Dimethylates 'Lys-4' of histone H3 (H3K4me2). H3 'Lys-4' methylation represents a specific tag for epigenetic transcriptional activation. Methylates only a limited fraction of nucleosomes of target genes (e.g. NAP and XTH33). Involved in epigenetic regulation of the floral repressor FLC and FT to prevent the transition from vegetative to reproductive development. This chain is Histone-lysine N-methyltransferase ATX2, found in Arabidopsis thaliana (Mouse-ear cress).